The primary structure comprises 841 residues: Probable outer membrane usher protein EcpC (841 aa).

The first 29 residues, 1 to 29 (MPLRRFSPGLKAQFAFGMVFLFVQPDASA), serve as a signal peptide directing secretion.

The protein belongs to the EcpC/MatD family.

In terms of biological role, part of the ecpRABCDE operon, which encodes the E.coli common pilus (ECP). ECP is found in both commensal and pathogenic strains and plays a dual role in early-stage biofilm development and host cell recognition. The sequence is that of Probable outer membrane usher protein EcpC (ecpC) from Escherichia coli O127:H6 (strain E2348/69 / EPEC).